A 340-amino-acid polypeptide reads, in one-letter code: MAMLKKRKHERTEQDCEYFQCYSDVSVHEEMIADTVRTNAYKLALLRNHSSLQGKTVLDVGAGTGILSVFSVQAGAQAVYAVEASSMSQLACQVVKSNDMENKVKVLNSSVESAEIPEQVDAIVSEWMGYALMYESMLPSVIYARDKWLKPGGLILPSCADLFIAPVNDLIVESRLDFWSEVKGMYGVDMSCMQSFARSCIMNKEMAVNLVSPEDVLSFPVRFASLDLNVCTQEEVRNLHGSFQFSCFGSSLLHGFAVWFSVTFPGENSVTLSTSPYGEETHWKQTLLYLDEEVQVEQDTEITGDVTLSPSDINPRHLRVLLNYSIGGGLRRTKQFQMGS.

Residues Asp-15–Leu-321 form the SAM-dependent MTase PRMT-type domain. The S-adenosyl-L-methionine site is built by His-28, Arg-37, Gly-61, Glu-83, and Glu-112. Residues Glu-126 and Glu-135 contribute to the active site.

This sequence belongs to the class I-like SAM-binding methyltransferase superfamily. Protein arginine N-methyltransferase family. PRMT6 subfamily.

The protein resides in the nucleus. It catalyses the reaction L-arginyl-[protein] + 2 S-adenosyl-L-methionine = N(omega),N(omega)-dimethyl-L-arginyl-[protein] + 2 S-adenosyl-L-homocysteine + 2 H(+). In terms of biological role, arginine methyltransferase that can catalyze the formation of both omega-N monomethylarginine (MMA) and asymmetrical dimethylarginine (aDMA), with a strong preference for the formation of aDMA. Preferentially methylates arginyl residues present in a glycine and arginine-rich domain and displays preference for monomethylated substrates. Specifically mediates the asymmetric dimethylation of histone H3 'Arg-2' to form H3R2me2a. H3R2me2a represents a specific tag for epigenetic transcriptional repression and is mutually exclusive with methylation on histone H3 'Lys-4' (H3K4me2 and H3K4me3). Acts as a transcriptional repressor of various genes such as HOXA2, THBS1 and TP53. Repression of TP53 blocks cellular senescence. Also methylates histone H2A and H4 'Arg-3' (H2AR3me and H4R3me, respectively). Acts as a regulator of DNA base excision during DNA repair by mediating the methylation of DNA polymerase beta (POLB), leading to the stimulation of its polymerase activity by enhancing DNA binding and processivity. Methylates HMGA1. Regulates alternative splicing events. Acts as a transcriptional coactivator of a number of steroid hormone receptors including ESR1, ESR2, PGR and NR3C1. The sequence is that of Protein arginine N-methyltransferase 6 (prmt6) from Xenopus tropicalis (Western clawed frog).